Reading from the N-terminus, the 582-residue chain is mRNA-decapping enzyme 1A (582 aa).

The residue at position 62 (Ser-62) is a Phosphoserine. The segment covering 132 to 141 has biased composition (basic and acidic residues); sequence RSQQAARDKQ. Disordered stretches follow at residues 132–154 and 172–214; these read RSQQ…DHRP and QMGD…PSGH. Residues Ser-142, Ser-179, Ser-180, Ser-315, Ser-319, and Ser-334 each carry the phosphoserine modification. Polar residues predominate over residues 173 to 196; that stretch reads MGDSNISSPGLQPSTQLSNLGSTE. Thr-348 is subject to Phosphothreonine. A Phosphoserine modification is found at Ser-353. An Asymmetric dimethylarginine modification is found at Arg-376. A Phosphothreonine modification is found at Thr-401. Ser-422, Ser-522, Ser-523, and Ser-525 each carry phosphoserine. Residues 513-536 form a disordered region; it reads RSSDLERKASSPSPLTIGTPESQR. Residues 522-533 show a composition bias toward polar residues; that stretch reads SSPSPLTIGTPE. Phosphothreonine occurs at positions 528 and 531.

Belongs to the DCP1 family. In terms of assembly, (Microbial infection) Interacts with rotavirus A non-structural protein 2; this interaction probably plays a role in the sequestration of DCP1A in viral factories. Interacts with rotavirus A non-structural protein 5; this interaction probably plays a role in its sequestration in viral factories. Forms a complex with EDC3, DCP2, DDX6 and EDC4/HEDLS, within this complex directly interacts with EDC3. Part of a cytoplasmic complex containing proteins involved in mRNA decay, including XRN1 and LSM1. Interacts with DCP1B. Interacts with DCP2. Interacts with DDX17 in an RNA-independent manner. Interacts with PNRC2. Interacts with SMAD4. Interacts with UPF1. Interacts with ZC3HAV1. Interacts with ZFP36L1. Interacts with NBDY. Interacts with DHX34; the interaction is RNA-independent. In terms of tissue distribution, detected in heart, brain, placenta, lung, skeletal muscle, liver, kidney and pancreas.

The protein localises to the cytoplasm. It is found in the P-body. The protein resides in the nucleus. It catalyses the reaction a 5'-end (N(7)-methyl 5'-triphosphoguanosine)-ribonucleoside in mRNA + H2O = N(7)-methyl-GDP + a 5'-end phospho-ribonucleoside in mRNA + 2 H(+). Its function is as follows. Necessary for the degradation of mRNAs, both in normal mRNA turnover and in nonsense-mediated mRNA decay. Removes the 7-methyl guanine cap structure from mRNA molecules, yielding a 5'-phosphorylated mRNA fragment and 7m-GDP. Contributes to the transactivation of target genes after stimulation by TGFB1. Essential for embryonic development. This Homo sapiens (Human) protein is mRNA-decapping enzyme 1A (DCP1A).